The primary structure comprises 219 residues: Large ribosomal subunit protein uL1 (219 aa).

This sequence belongs to the universal ribosomal protein uL1 family. In terms of assembly, part of the 50S ribosomal subunit.

Probably involved in E site tRNA release. Binds directly to 23S rRNA. Its function is as follows. Protein L1 is also a translational repressor protein, it controls the translation of its operon by binding to its mRNA. This is Large ribosomal subunit protein uL1 from Methanocaldococcus jannaschii (strain ATCC 43067 / DSM 2661 / JAL-1 / JCM 10045 / NBRC 100440) (Methanococcus jannaschii).